The primary structure comprises 403 residues: Blue light- and temperature-regulated antirepressor BluF (403 aa).

One can recognise a BLUF domain in the interval 2-93 (LTTLIYRSHI…ARRFGKAGME (92 aa)). Residues 98 to 144 (RLHERDDVLQAVFDKGTSKFQLTYDDRALQFFRTFVLATEQSTYFEI) form a joining helix region. The 249-residue stretch at 155–403 (DGSDKELDSC…IPSIAWPEKK (249 aa)) folds into the EAL domain.

In terms of assembly, monomer, it undergoes transient dimerization following photoexcitation or upon temperature reduction, with a relaxation time of about 2 minutes. The dimer may be the inactive state. Interacts with the N- and C-terminal domains of BluR. Can also interact with the C-terminal domain of MlrA. The cofactor is FAD.

In terms of biological role, binds to and releases the BluR repressor from its bound DNA target in a blue light-dependent (470 nm) fashion. A shift to low temperature also triggers a BluF-mediated relief of repression by BluR, suggesting BluF may serve as a thermometer. Blue light may act to increase the affinity of BluF for BluR, allowing it to be released from its operator. The protein has a reversible photocycle, and undergoes structural changes, probably in the EAL domain, in response to light. The protein is Blue light- and temperature-regulated antirepressor BluF of Escherichia coli (strain K12).